We begin with the raw amino-acid sequence, 183 residues long: Glutamyl-tRNA(Gln) amidotransferase subunit F, mitochondrial (183 aa).

The protein belongs to the GatF family. As to quaternary structure, subunit of the heterotrimeric GatFAB amidotransferase (AdT) complex, composed of A (HER2), B (PET112) and F (YGR102C) subunits.

The protein resides in the mitochondrion inner membrane. It catalyses the reaction L-glutamyl-tRNA(Gln) + L-glutamine + ATP + H2O = L-glutaminyl-tRNA(Gln) + L-glutamate + ADP + phosphate + H(+). In terms of biological role, allows the formation of correctly charged Gln-tRNA(Gln) through the transamidation of misacylated Glu-tRNA(Gln) in the mitochondria. The reaction takes place in the presence of glutamine and ATP through an activated gamma-phospho-Glu-tRNA(Gln). Required for proper protein synthesis within the mitochondrion. This is Glutamyl-tRNA(Gln) amidotransferase subunit F, mitochondrial from Saccharomyces cerevisiae (strain ATCC 204508 / S288c) (Baker's yeast).